A 235-amino-acid polypeptide reads, in one-letter code: Venom metalloproteinase antarease-like TserMP_B (235 aa).

Residues 4–233 (IVVEYYIVTD…PTASCIFQQC (230 aa)) form the Peptidase M12B domain. An intrachain disulfide couples C137 to C228. H161 lines the Zn(2+) pocket. Residue E162 is part of the active site. Zn(2+)-binding residues include H165 and H171.

The protein belongs to the venom metalloproteinase (M12B) family. Zn(2+) is required as a cofactor. As to expression, expressed by the venom gland.

The protein localises to the secreted. Its activity is regulated as follows. Inhibited by EDTA. In terms of biological role, acts as a metalloprotease. Penetrates intact tissue and specifically cleaves the vesicle-associated membrane protein 2 (VAMP2) (part of the SNARE complex) involved in pancreatic secretion, thus disrupting the normal vesicular traffic. In Tityus serrulatus (Brazilian scorpion), this protein is Venom metalloproteinase antarease-like TserMP_B.